The primary structure comprises 321 residues: 1D-myo-inositol 2-acetamido-2-deoxy-alpha-D-glucopyranoside deacetylase (321 aa).

3 residues coordinate Zn(2+): His15, Asp18, and His150. Positions 280–321 (PEGERESDLFAGLPPATDGTGAAGAPSATGAANPADAEGGAA) are disordered. The span at 290–321 (AGLPPATDGTGAAGAPSATGAANPADAEGGAA) shows a compositional bias: low complexity.

This sequence belongs to the MshB deacetylase family. Zn(2+) serves as cofactor.

The catalysed reaction is 1D-myo-inositol 2-acetamido-2-deoxy-alpha-D-glucopyranoside + H2O = 1D-myo-inositol 2-amino-2-deoxy-alpha-D-glucopyranoside + acetate. Catalyzes the deacetylation of 1D-myo-inositol 2-acetamido-2-deoxy-alpha-D-glucopyranoside (GlcNAc-Ins) in the mycothiol biosynthesis pathway. In Streptomyces griseus subsp. griseus (strain JCM 4626 / CBS 651.72 / NBRC 13350 / KCC S-0626 / ISP 5235), this protein is 1D-myo-inositol 2-acetamido-2-deoxy-alpha-D-glucopyranoside deacetylase.